The sequence spans 673 residues: Putative lipase atg15 (673 aa).

Residues 1–7 (MPRKRSR) are Cytoplasmic-facing. A helical; Signal-anchor for type II membrane protein membrane pass occupies residues 8-28 (FELSIHSLLLSVAVLSGAAYA). Residues 29–673 (SGYYPPSQQV…AVTSAPTPTS (645 aa)) lie on the Lumenal side of the membrane. 5 N-linked (GlcNAc...) asparagine glycosylation sites follow: Asn156, Asn191, Asn213, Asn271, and Asn295. The active-site Charge relay system is Ser311. Asn457 carries N-linked (GlcNAc...) asparagine glycosylation.

Belongs to the AB hydrolase superfamily. Lipase family. As to quaternary structure, binds to both phosphatidylinositol (PI) and phosphatidylinositol 3,5-bisphosphate (PIP2).

Its subcellular location is the endosome. It localises to the multivesicular body membrane. It is found in the prevacuolar compartment membrane. It carries out the reaction a triacylglycerol + H2O = a diacylglycerol + a fatty acid + H(+). Functionally, lipase which is essential for lysis of subvacuolar cytoplasm to vacuole targeted bodies and intravacuolar autophagic bodies. Involved in the lysis of intravacuolar multivesicular body (MVB) vesicles. The intravacuolar membrane disintegration by atg15 is critical to life span extension. The protein is Putative lipase atg15 (atg15) of Penicillium rubens (strain ATCC 28089 / DSM 1075 / NRRL 1951 / Wisconsin 54-1255) (Penicillium chrysogenum).